The chain runs to 284 residues: Circadian clock oscillator protein KaiA (284 aa).

Positions 1–135 (MLSQIAICIW…LRLAPVETMA (135 aa)) are psR domain, binds oxidized quinones. One can recognise a KaiA N-terminal domain in the interval 1-164 (MLSQIAICIW…DLAQRLQERL (164 aa)). The flexible linker stretch occupies residues 165–173 (GYLGVYYKR). The 109-residue stretch at 174 to 282 (DPDRFLRNLP…CEMYRRSIPR (109 aa)) folds into the KaiA C-terminal domain.

It belongs to the KaiA family. As to quaternary structure, homodimer. The KaiABC complex composition changes during the circadian cycle to control KaiC phosphorylation. Complexes KaiC(6), KaiA(2-4):KaiC(6), KaiB(6):KaiC(6) and KaiC(6):KaiB(6):KaiA(12) are among the most important forms, many form cooperatively. The KaiA:KaiB complex is only found at 20-24 hours in the circadian cycle (subjective night). Binds to the C-terminal A-loop of KaiC via a coiled-coil structure. KaiA and CikA compete for binding to KaiB(fs). CikA copurifies with this protein in the clock complex. Interacts with LdpA.

With respect to regulation, binding of oxidized quinones (produced as darkness falls) prevents KaiA from stimulating KaiC autophosphorylation. Its function is as follows. Key component of the KaiABC oscillator complex, which constitutes the main circadian regulator in cyanobacteria. Complex composition changes during the circadian cycle to control KaiC phosphorylation. KaiA stimulates KaiC autophosphorylation, while KaiB sequesters KaiA, leading to KaiC autodephosphorylation. KaiA binding to the KaiC CII domain during the subjective day yields KaiA(2-4):KaiC(6) complexes which stimulate KaiC autophosphorylation. A KaiA dimer is sufficient to enhance KaiC hexamer phosphorylation. Phospho-Ser-431 KaiC accumulation triggers binding of KaiB during the subjective night to form the KaiB(6):KaiC(6) complex, leading to changes in the output regulators CikA and SasA. KaiB(6):KaiC(6) formation exposes a site for KaiA binding on KaiB that sequesters KaiA from KaiC's CII domain, making the KaiC(6):KaiB(6):KaiA(12) complex resulting in KaiC autodephosphorylation. Complete dephosphorylation of KaiC leads to dissociation of KaiA(2):KaiB(1), completing 1 cycle of the Kai oscillator. In terms of biological role, circadian oscillations can be generated in vitro by incubating KaiA, KaiB and KaiC with 1 mM ATP. The cycle is self-sustainable for at least 3 cycles and resistant to temperature changes. A very robust clock is reconstituted with KaiA, KaiB, KaiC, SasA, CikA and RpaA; output is measured by transcription from an appropriate reporter. Functionally, kaiA binds oxidized quinones via its N-terminal PsR domain and is able to sense redox signals directly; quinone analog DBMIB (2,5-dibromo-3-methyl-6-isopropyl-p-benzoquinone) blocks KaiA stimulation of KaiC phosphorylation. The homodimer binds up to 8 quinones in the crystal structure, 3 in the PsR domain and 1 via the C-terminal helical bundle. Binding of oxidized quinone to the KaiA C-terminal domain reduces the phosphorylation of KaiC slightly; quinones may interact in a complex manner with KaiA to mediate clock input. The protein is Circadian clock oscillator protein KaiA of Synechococcus elongatus (strain ATCC 33912 / PCC 7942 / FACHB-805) (Anacystis nidulans R2).